Here is a 419-residue protein sequence, read N- to C-terminus: Enolase (419 aa).

Glutamine 161 provides a ligand contact to (2R)-2-phosphoglycerate. Catalysis depends on glutamate 205, which acts as the Proton donor. 3 residues coordinate Mg(2+): aspartate 240, glutamate 283, and aspartate 309. 4 residues coordinate (2R)-2-phosphoglycerate: lysine 334, arginine 363, serine 364, and lysine 385. Lysine 334 serves as the catalytic Proton acceptor.

Belongs to the enolase family. Mg(2+) serves as cofactor.

The protein localises to the cytoplasm. Its subcellular location is the secreted. The protein resides in the cell surface. The enzyme catalyses (2R)-2-phosphoglycerate = phosphoenolpyruvate + H2O. The protein operates within carbohydrate degradation; glycolysis; pyruvate from D-glyceraldehyde 3-phosphate: step 4/5. Catalyzes the reversible conversion of 2-phosphoglycerate (2-PG) into phosphoenolpyruvate (PEP). It is essential for the degradation of carbohydrates via glycolysis. The protein is Enolase of Saccharolobus islandicus (strain M.16.27) (Sulfolobus islandicus).